The chain runs to 596 residues: Elongation factor 4 (596 aa).

The tr-type G domain occupies 2 to 184; that stretch reads KHIRNFSIIA…VIVAKIPPPE (183 aa). GTP is bound by residues 14-19 and 131-134; these read DHGKST and NKID.

This sequence belongs to the TRAFAC class translation factor GTPase superfamily. Classic translation factor GTPase family. LepA subfamily.

Its subcellular location is the cell inner membrane. The catalysed reaction is GTP + H2O = GDP + phosphate + H(+). Its function is as follows. Required for accurate and efficient protein synthesis under certain stress conditions. May act as a fidelity factor of the translation reaction, by catalyzing a one-codon backward translocation of tRNAs on improperly translocated ribosomes. Back-translocation proceeds from a post-translocation (POST) complex to a pre-translocation (PRE) complex, thus giving elongation factor G a second chance to translocate the tRNAs correctly. Binds to ribosomes in a GTP-dependent manner. This chain is Elongation factor 4, found in Shewanella sp. (strain W3-18-1).